Here is a 396-residue protein sequence, read N- to C-terminus: NADH-quinone oxidoreductase subunit D (396 aa).

This sequence belongs to the complex I 49 kDa subunit family. As to quaternary structure, NDH-1 is composed of 14 different subunits. Subunits NuoB, C, D, E, F, and G constitute the peripheral sector of the complex.

The protein localises to the cell inner membrane. It carries out the reaction a quinone + NADH + 5 H(+)(in) = a quinol + NAD(+) + 4 H(+)(out). Its function is as follows. NDH-1 shuttles electrons from NADH, via FMN and iron-sulfur (Fe-S) centers, to quinones in the respiratory chain. The immediate electron acceptor for the enzyme in this species is believed to be ubiquinone. Couples the redox reaction to proton translocation (for every two electrons transferred, four hydrogen ions are translocated across the cytoplasmic membrane), and thus conserves the redox energy in a proton gradient. In Brucella suis biovar 1 (strain 1330), this protein is NADH-quinone oxidoreductase subunit D.